We begin with the raw amino-acid sequence, 354 residues long: Rhodopsin (354 aa).

The Extracellular portion of the chain corresponds to 1–36 (MNGTEGPYFYIPMVNTTGIVRSPYDYPQYYLVNPAA). N-linked (GlcNAc...) asparagine glycosylation is found at N2 and N15. The helical transmembrane segment at 37–61 (YAALGAYMFFLILVGFPINFLTLYV) threads the bilayer. Over 62-73 (TIEHKKLRTPLN) the chain is Cytoplasmic. The chain crosses the membrane as a helical span at residues 74 to 96 (YILLNLAVANLFMVFGGFTTTMY). Topologically, residues 97-110 (TSMHGYFVLGRLGC) are extracellular. An intrachain disulfide couples C110 to C187. A helical transmembrane segment spans residues 111 to 133 (NLEGFFATLGGEIALWSLVVLAV). Positions 134–136 (ERW) match the 'Ionic lock' involved in activated form stabilization motif. The Cytoplasmic portion of the chain corresponds to 134-152 (ERWMVVCKPISNFRFGENH). A helical transmembrane segment spans residues 153–173 (AIMGLAMTWLMASACAVPPLV). Topologically, residues 174–202 (GWSRYIPEGMQCSCGVDYYTRAEGFNNES) are extracellular. A glycan (N-linked (GlcNAc...) asparagine) is linked at N200. A helical membrane pass occupies residues 203–224 (FVVYMFCCHFMIPLIIVFFCYG). At 225-252 (RLLCAVKEAAAAQQESETTQRAEREVTR) the chain is on the cytoplasmic side. The chain crosses the membrane as a helical span at residues 253–274 (MVVIMVIAFLVCWLPYASVAWW). Residues 275–286 (IFTHQGSEFGPV) lie on the Extracellular side of the membrane. A helical transmembrane segment spans residues 287–308 (FMTIPAFFAKSSSIYNPMIYIC). K296 is subject to N6-(retinylidene)lysine. Residues 309–354 (MNKQFRNCMITTLCCGKNPFEEEEGASSTASKTEASSVSSSSVSPA) lie on the Cytoplasmic side of the membrane. 2 S-palmitoyl cysteine lipidation sites follow: C322 and C323. A disordered region spans residues 329-354 (EEEEGASSTASKTEASSVSSSSVSPA). The segment covering 334–354 (ASSTASKTEASSVSSSSVSPA) has biased composition (low complexity).

It belongs to the G-protein coupled receptor 1 family. Opsin subfamily. Phosphorylated on some or all of the serine and threonine residues present in the C-terminal region. Post-translationally, contains one covalently linked retinal chromophore.

The protein resides in the membrane. The protein localises to the cell projection. It is found in the cilium. Its subcellular location is the photoreceptor outer segment. Its function is as follows. Photoreceptor required for image-forming vision at low light intensity. While most salt water fish species use retinal as chromophore, most freshwater fish use 3-dehydroretinal, or a mixture of retinal and 3-dehydroretinal. Light-induced isomerization of 11-cis to all-trans retinal triggers a conformational change that activates signaling via G-proteins. Subsequent receptor phosphorylation mediates displacement of the bound G-protein alpha subunit by arrestin and terminates signaling. The chain is Rhodopsin (rho) from Mullus surmuletus (Striped red mullet).